Here is a 447-residue protein sequence, read N- to C-terminus: Serine/threonine-protein phosphatase 2A 55 kDa regulatory subunit B delta isoform (447 aa).

WD repeat units lie at residues 26–65, 91–132, 175–213, 224–264, 283–321, 338–379, and 414–447; these read AEADIISTVEFNCSGELLATGDKGGRVVIFQREQENKSRP, EIEE…KRVE, AHTYHINSISVNSDHQTYLSADDLRVNLWHLEITDRSFN, ELTE…LCDR, EIISSISDVKFSHSGRYMMTRDYLSVKVWDLNMESRPVE, ENDC…DITL, and DFNKKILHTAWHPTDNIIAVAATNNLYIFQDKVN.

It belongs to the phosphatase 2A regulatory subunit B family. PP2A consists of a common heterodimeric core enzyme, composed of a 36 kDa catalytic subunit (subunit C) and a 65 kDa constant regulatory subunit (PR65 or subunit A), that associates with a variety of regulatory subunits. Proteins that associate with the core dimer include three families of regulatory subunits B (the R2/B/PR55/B55, R3/B''/PR72/PR130/PR59 and R5/B'/B56 families), the 48 kDa variable regulatory subunit, viral proteins, and cell signaling molecules. Interacts with ensa (when phosphorylated at 'Ser-67') and arpp19 (when phosphorylated at 'Ser-67'), leading to inhibit PP2A activity.

The protein resides in the cytoplasm. Substrate-recognition subunit of protein phosphatase 2A (PP2A) that plays a key role in cell cycle by controlling mitosis entry and exit. The activity of PP2A complexes containing ppp2r2d (PR55-delta) fluctuate during the cell cycle: the activity is high in interphase and low in mitosis. During mitosis, activity of PP2A is inhibited via interaction with phosphorylated ensa and arpp19 inhibitors. PP2A complexes containing ppp2r2d (PR55-delta) also regulate the activity of TGF-beta/Activin/Nodal signaling by restricting receptor activity. Within the PP2A complexes, the B regulatory subunits modulate substrate selectivity and catalytic activity, and may also direct the localization of the catalytic enzyme to a particular subcellular compartment. This chain is Serine/threonine-protein phosphatase 2A 55 kDa regulatory subunit B delta isoform (ppp2r2d), found in Xenopus laevis (African clawed frog).